We begin with the raw amino-acid sequence, 356 residues long: Phospho-2-dehydro-3-deoxyheptonate aldolase, Tyr-sensitive (356 aa).

The protein belongs to the class-I DAHP synthase family.

The enzyme catalyses D-erythrose 4-phosphate + phosphoenolpyruvate + H2O = 7-phospho-2-dehydro-3-deoxy-D-arabino-heptonate + phosphate. Its pathway is metabolic intermediate biosynthesis; chorismate biosynthesis; chorismate from D-erythrose 4-phosphate and phosphoenolpyruvate: step 1/7. Functionally, stereospecific condensation of phosphoenolpyruvate (PEP) and D-erythrose-4-phosphate (E4P) giving rise to 3-deoxy-D-arabino-heptulosonate-7-phosphate (DAHP). The chain is Phospho-2-dehydro-3-deoxyheptonate aldolase, Tyr-sensitive (aroF) from Salmonella typhi.